Here is a 1034-residue protein sequence, read N- to C-terminus: Beta-galactosidase (1034 aa).

The active-site Proton donor is glutamate 481. Residue glutamate 547 is the Nucleophile of the active site.

The protein belongs to the glycosyl hydrolase 2 family.

It catalyses the reaction Hydrolysis of terminal non-reducing beta-D-galactose residues in beta-D-galactosides.. This is Beta-galactosidase (bgaM) from Priestia megaterium (strain DSM 319 / IMG 1521) (Bacillus megaterium).